Consider the following 419-residue polypeptide: GTPase Obg (419 aa).

Residues 1–158 (MIFIDTAEII…RRLRLELKLV (158 aa)) enclose the Obg domain. Positions 159-328 (AHVGLVGLPN…LVDVLFELIS (170 aa)) constitute an OBG-type G domain. Residues 165 to 172 (GLPNAGKS), 190 to 194 (FTTRS), 211 to 214 (DVPG), 281 to 284 (NKID), and 309 to 311 (SAA) each bind GTP. Mg(2+)-binding residues include Ser172 and Thr192. One can recognise an OCT domain in the interval 344–419 (ELPPLPEDFS…VIHDKAFEIL (76 aa)).

This sequence belongs to the TRAFAC class OBG-HflX-like GTPase superfamily. OBG GTPase family. Monomer. Mg(2+) serves as cofactor.

Its subcellular location is the cytoplasm. In terms of biological role, an essential GTPase which binds GTP, GDP and possibly (p)ppGpp with moderate affinity, with high nucleotide exchange rates and a fairly low GTP hydrolysis rate. Plays a role in control of the cell cycle, stress response, ribosome biogenesis and in those bacteria that undergo differentiation, in morphogenesis control. In Coprothermobacter proteolyticus (strain ATCC 35245 / DSM 5265 / OCM 4 / BT), this protein is GTPase Obg.